A 331-amino-acid polypeptide reads, in one-letter code: Anthranilate phosphoribosyltransferase (331 aa).

5-phospho-alpha-D-ribose 1-diphosphate is bound by residues G79, 82–83, S87, 89–92, 107–115, and S119; these read GD, NIST, and KHCNGNISS. G79 serves as a coordination point for anthranilate. Position 91 (S91) interacts with Mg(2+). N110 is an anthranilate binding site. R165 contacts anthranilate. The Mg(2+) site is built by D223 and E224.

Belongs to the anthranilate phosphoribosyltransferase family. Homodimer. It depends on Mg(2+) as a cofactor.

It catalyses the reaction N-(5-phospho-beta-D-ribosyl)anthranilate + diphosphate = 5-phospho-alpha-D-ribose 1-diphosphate + anthranilate. It participates in amino-acid biosynthesis; L-tryptophan biosynthesis; L-tryptophan from chorismate: step 2/5. In terms of biological role, catalyzes the transfer of the phosphoribosyl group of 5-phosphorylribose-1-pyrophosphate (PRPP) to anthranilate to yield N-(5'-phosphoribosyl)-anthranilate (PRA). In Buchnera aphidicola subsp. Baizongia pistaciae (strain Bp), this protein is Anthranilate phosphoribosyltransferase.